We begin with the raw amino-acid sequence, 186 residues long: Casparian strip membrane protein 3 (186 aa).

The Cytoplasmic portion of the chain corresponds to 1-26; it reads MKAGALELGEGSKTSIPRGGVNRGIS. The helical transmembrane segment at 27–47 threads the bilayer; that stretch reads ILDFILRLITIIGTLGSAIAM. Residues 48 to 74 lie on the Extracellular side of the membrane; the sequence is GTTNETLPFFTQFTQFRAEYDDLPTFT. N-linked (GlcNAc...) asparagine glycosylation occurs at N51. Residues 75 to 95 form a helical membrane-spanning segment; the sequence is FFVIANSIVSGYLVLSLPMSI. Residues 96–107 are Cytoplasmic-facing; it reads LHIVRSGARASR. Residues 108 to 128 traverse the membrane as a helical segment; sequence IVLIFFDTAMLALLTAAASAA. The Extracellular portion of the chain corresponds to 129–161; sequence SAIVYLAHKGNAQANWFAICQQFKSFCERISGS. A helical membrane pass occupies residues 162–182; that stretch reads LIGSFGGIILFILLVLLSAVA. The Cytoplasmic segment spans residues 183–186; that stretch reads LSRC.

The protein belongs to the Casparian strip membrane proteins (CASP) family. As to quaternary structure, homodimer and heterodimers.

It localises to the cell membrane. In terms of biological role, regulates membrane-cell wall junctions and localized cell wall deposition. Required for establishment of the Casparian strip membrane domain (CSD) and the subsequent formation of Casparian strips, a cell wall modification of the root endodermis that determines an apoplastic barrier between the intraorganismal apoplasm and the extraorganismal apoplasm and prevents lateral diffusion. This chain is Casparian strip membrane protein 3, found in Vitis vinifera (Grape).